The sequence spans 283 residues: Thymidylate synthase (283 aa).

Arg-22 is a dUMP binding site. Residue Cys-160 is the Nucleophile of the active site. DUMP contacts are provided by residues 180 to 183 (RSCD), Asn-191, and 221 to 223 (HIY). Residue Asp-183 coordinates (6R)-5,10-methylene-5,6,7,8-tetrahydrofolate. Ser-282 contributes to the (6R)-5,10-methylene-5,6,7,8-tetrahydrofolate binding site.

Belongs to the thymidylate synthase family. Bacterial-type ThyA subfamily. In terms of assembly, homodimer.

It is found in the cytoplasm. It catalyses the reaction dUMP + (6R)-5,10-methylene-5,6,7,8-tetrahydrofolate = 7,8-dihydrofolate + dTMP. Its pathway is pyrimidine metabolism; dTTP biosynthesis. Functionally, catalyzes the reductive methylation of 2'-deoxyuridine-5'-monophosphate (dUMP) to 2'-deoxythymidine-5'-monophosphate (dTMP) while utilizing 5,10-methylenetetrahydrofolate (mTHF) as the methyl donor and reductant in the reaction, yielding dihydrofolate (DHF) as a by-product. This enzymatic reaction provides an intracellular de novo source of dTMP, an essential precursor for DNA biosynthesis. This is Thymidylate synthase from Shewanella sediminis (strain HAW-EB3).